We begin with the raw amino-acid sequence, 296 residues long: Probable AP endonuclease (296 aa).

An intrachain disulfide couples Cys-16 to Cys-20. Zn(2+) is bound by residues His-78, His-115, Glu-142, His-182, His-218, Asp-231, His-233, and Glu-271.

It belongs to the AP endonuclease 2 family. The cofactor is Zn(2+).

The protein resides in the host nucleus. The protein localises to the host cytoplasm. It is found in the virion. Functionally, endonuclease that plays a role in DNA repair. Cleaves phosphodiester bonds on the 5' side of apurinic or apyrimidinic sites (AP sites). In addition to endonuclease activity, the ASFV enzyme has a proofreading 3'-5' exonuclease activity that is considerably more efficient in the elimination of a mismatch than in that of a correctly paired base. Displays 3'-phosphatase and 3'-repair diesterase activities. The single nucleotide gaps generated by the AP endonuclease are filled by the viral AP endonuclease and DNA ligase. The chain is Probable AP endonuclease from Ornithodoros (relapsing fever ticks).